The primary structure comprises 190 residues: MAKATTIKEALSRWEEKTGQKPSDAKEIKLYAQIPPIEKMDASLSTLGNCEKLSLSTNCIEKIANLNGLKNLRILSLGRNNIKNLNGLEAVGETLEELWISYNFIEKLKGIHVMKKLKILYMSNNLVKDWAEFLKLAELPCLEDLVFVGNPLEEKHSAEGNWIDEATKRVPKLKKLDGTPVIKEDEEEES.

An N-acetylalanine modification is found at Ala2. 4 LRR repeats span residues 49–70 (NCEK…NGLK), 71–92 (NLRI…EAVG), 94–115 (TLEE…HVMK), and 116–137 (KLKI…LKLA). Ser56 carries the phosphoserine modification. Positions 150–190 (NPLEEKHSAEGNWIDEATKRVPKLKKLDGTPVIKEDEEEES) constitute an LRRCT domain.

Belongs to the dynein light chain LC1-type family. In terms of assembly, interacts with ZMYND10 (via C-terminus). Interacts with DNAH5, a outer arm dynein heavy chain. Interacts with tubulin located within the A-tubule of the outer doublets in a ATP-independent manner. Expressed in the respiratory epithelium of the upper airways and the ependymal cells lining the brain ventricles.

It localises to the cytoplasm. It is found in the cytoskeleton. The protein localises to the cilium axoneme. Its function is as follows. Part of the multisubunit axonemal ATPase complexes that generate the force for cilia motility and govern beat frequency. Component of the outer arm dynein (ODA). May be involved in a mechanosensory feedback mechanism controlling ODA activity based on external conformational cues by tethering the outer arm dynein heavy chain (DNAH5) to the microtubule within the axoneme. Important for ciliary function in the airways and for the function of the cilia that produce the nodal flow essential for the determination of the left-right asymmetry. In Mus musculus (Mouse), this protein is Dynein axonemal light chain 1 (Dnal1).